A 469-amino-acid chain; its full sequence is Peripherin (469 aa).

Composition is skewed to low complexity over residues 1–18 and 27–53; these read MSHP…SYRR and SPGA…PGSS. The interval 1–60 is disordered; the sequence is MSHPSGLRSSVSSTSYRRTFGPPPSLSPGAFSYSSSSRFSSSRLLGSASPGSSVRLGSFR. The segment at 1–98 is head; sequence MSHPSGLRSS…FLATRSNEKQ (98 aa). Tyr-16 carries the post-translational modification 3'-nitrotyrosine. Residues Ser-27, Ser-49, and Ser-58 each carry the phosphoserine modification. Residues 96–406 form the IF rod domain; sequence EKQELQELND…KLLEGEESRI (311 aa). The coil 1A stretch occupies residues 99–131; the sequence is ELQELNDRFANFIEKVRFLEQQNAALRGELNQA. Residues 132–142 form a linker 1 region; it reads RGQEPARADQL. The coil 1B stretch occupies residues 143-238; it reads CQQELRELRR…KLHEEELRDL (96 aa). The tract at residues 239 to 261 is linker 2; sequence QLSVESQQVQHVEVEATVKPELT. Residues 262–404 are coil 2; it reads AALRDIRAQY…YRKLLEGEES (143 aa). Residue Tyr-378 is modified to 3'-nitrotyrosine. The interval 405-469 is tail; it reads RISVPVHSFA…SELDKSPQSY (65 aa). A disordered region spans residues 447 to 469; it reads GEQVVTESQKEQHSELDKSPQSY. Tyr-469 is subject to Phosphotyrosine.

This sequence belongs to the intermediate filament family. Forms homodimers (in vitro). Homopolymerizes into a filamentous network (in vitro). Forms heterodimers with NEFL, NEFM or NEFH (in vitro). Interacts with DST (via C-terminus). Interacts with RAB7A; the interaction is direct. Interacts with PRKCE (via phorbol-ester/DAG-type 2 domain). In terms of processing, phosphorylated; phosphorylation increases after nerve injury in regenerating neurons.

Its subcellular location is the cytoplasm. The protein resides in the cytoskeleton. The protein localises to the cell projection. It localises to the axon. It is found in the perikaryon. Class-III neuronal intermediate filament protein. May form an independent structural network without the involvement of other neurofilaments or may cooperate with the neuronal intermediate filament proteins NEFL, NEFH, NEFM and INA to form a filamentous network. Assembly of the neuronal intermediate filaments may be regulated by RAB7A. Plays a role in the development of unmyelinated sensory neurons. May be involved in axon elongation and axon regeneration after injury. Inhibits neurite extension in type II spiral ganglion neurons in the cochlea. This chain is Peripherin (PRPH), found in Bos taurus (Bovine).